The following is a 494-amino-acid chain: Aspartyl/glutamyl-tRNA(Asn/Gln) amidotransferase subunit B (494 aa).

The protein belongs to the GatB/GatE family. GatB subfamily. As to quaternary structure, heterotrimer of A, B and C subunits.

It carries out the reaction L-glutamyl-tRNA(Gln) + L-glutamine + ATP + H2O = L-glutaminyl-tRNA(Gln) + L-glutamate + ADP + phosphate + H(+). The catalysed reaction is L-aspartyl-tRNA(Asn) + L-glutamine + ATP + H2O = L-asparaginyl-tRNA(Asn) + L-glutamate + ADP + phosphate + 2 H(+). Allows the formation of correctly charged Asn-tRNA(Asn) or Gln-tRNA(Gln) through the transamidation of misacylated Asp-tRNA(Asn) or Glu-tRNA(Gln) in organisms which lack either or both of asparaginyl-tRNA or glutaminyl-tRNA synthetases. The reaction takes place in the presence of glutamine and ATP through an activated phospho-Asp-tRNA(Asn) or phospho-Glu-tRNA(Gln). The chain is Aspartyl/glutamyl-tRNA(Asn/Gln) amidotransferase subunit B from Trichodesmium erythraeum (strain IMS101).